The primary structure comprises 311 residues: tRNA dimethylallyltransferase (311 aa).

14–21 (GPTAVGKT) provides a ligand contact to ATP. Residue 16 to 21 (TAVGKT) coordinates substrate. Residues 39–42 (DSMQ) form an interaction with substrate tRNA region.

The protein belongs to the IPP transferase family. Monomer. The cofactor is Mg(2+).

It carries out the reaction adenosine(37) in tRNA + dimethylallyl diphosphate = N(6)-dimethylallyladenosine(37) in tRNA + diphosphate. Functionally, catalyzes the transfer of a dimethylallyl group onto the adenine at position 37 in tRNAs that read codons beginning with uridine, leading to the formation of N6-(dimethylallyl)adenosine (i(6)A). This Lactiplantibacillus plantarum (strain ATCC BAA-793 / NCIMB 8826 / WCFS1) (Lactobacillus plantarum) protein is tRNA dimethylallyltransferase.